We begin with the raw amino-acid sequence, 460 residues long: V-type ATP synthase beta chain (460 aa).

This sequence belongs to the ATPase alpha/beta chains family.

In terms of biological role, produces ATP from ADP in the presence of a proton gradient across the membrane. The V-type beta chain is a regulatory subunit. The protein is V-type ATP synthase beta chain of Clostridium novyi (strain NT).